A 257-amino-acid polypeptide reads, in one-letter code: Sad1-interacting factor 1 (257 aa).

The disordered stretch occupies residues leucine 16–glutamate 68. Composition is skewed to polar residues over residues arginine 26–aspartate 37 and glutamate 54–serine 63. Phosphoserine is present on serine 35. Serine 132 is subject to Phosphoserine. Residue threonine 134 is modified to Phosphothreonine. Helical transmembrane passes span leucine 160–tryptophan 180 and phenylalanine 231–phenylalanine 251.

Interacts with kms1 and sad1.

It localises to the membrane. In Schizosaccharomyces pombe (strain 972 / ATCC 24843) (Fission yeast), this protein is Sad1-interacting factor 1 (sif1).